Consider the following 438-residue polypeptide: Fibrinogen gamma chain (438 aa).

Residues 1-25 (MTRLPKQGLLLLQSLALLSSAFGNI) form the signal peptide. Asn-76 is a glycosylation site (N-linked (GlcNAc...) asparagine). A Fibrinogen C-terminal domain is found at 167–414 (QIQEFTGKDC…SVTMKIMPLN (248 aa)). A disulfide bridge links Cys-176 with Cys-205. Ca(2+)-binding residues include Asp-341, Asp-343, and Gly-347. Cys-349 and Cys-362 are oxidised to a cystine.

Heterohexamer; disulfide linked. Contains 2 sets of 3 non-identical chains (alpha, beta and gamma). The 2 heterotrimers are in head to head conformation with the N-termini in a small central domain. In terms of processing, conversion of fibrinogen to fibrin is triggered by thrombin, which cleaves fibrinopeptides A and B from alpha and beta chains, and thus exposes the N-terminal polymerization sites responsible for the formation of the soft clot. The soft clot is converted into the hard clot by factor XIIIA which catalyzes the epsilon-(gamma-glutamyl)lysine cross-linking between gamma chains (stronger) and between alpha chains (weaker) of different monomers.

It is found in the secreted. Functionally, together with fibrinogen alpha (FGA) and fibrinogen beta (FGB), polymerizes to form an insoluble fibrin matrix. Has a major function in hemostasis as one of the primary components of blood clots. This Xenopus laevis (African clawed frog) protein is Fibrinogen gamma chain (fgg).